Reading from the N-terminus, the 167-residue chain is Putative universal stress protein SSP1056 (167 aa).

It belongs to the universal stress protein A family.

The protein localises to the cytoplasm. In Staphylococcus saprophyticus subsp. saprophyticus (strain ATCC 15305 / DSM 20229 / NCIMB 8711 / NCTC 7292 / S-41), this protein is Putative universal stress protein SSP1056.